Consider the following 378-residue polypeptide: Cysteine synthase (378 aa).

A disordered region spans residues 10-31 (NSEGDSNQQQNNNNNSNNNLKE). The segment covering 15–28 (SNQQQNNNNNSNNN) has biased composition (low complexity). Lysine 79 is modified (N6-(pyridoxal phosphate)lysine). Pyridoxal 5'-phosphate-binding positions include 215 to 219 (GTGGT) and serine 319.

The protein belongs to the cysteine synthase/cystathionine beta-synthase family. Pyridoxal 5'-phosphate serves as cofactor.

The enzyme catalyses O-acetyl-L-serine + hydrogen sulfide = L-cysteine + acetate. Its pathway is amino-acid biosynthesis; L-cysteine biosynthesis; L-cysteine from L-serine: step 2/2. The sequence is that of Cysteine synthase (cysK) from Dictyostelium discoideum (Social amoeba).